The primary structure comprises 158 residues: Cyclic pyranopterin monophosphate synthase (158 aa).

Substrate is bound by residues 73–75 and 110–111; these read LCH and ME. The active site involves D125.

Belongs to the MoaC family. In terms of assembly, homohexamer; trimer of dimers.

The catalysed reaction is (8S)-3',8-cyclo-7,8-dihydroguanosine 5'-triphosphate = cyclic pyranopterin phosphate + diphosphate. Its pathway is cofactor biosynthesis; molybdopterin biosynthesis. In terms of biological role, catalyzes the conversion of (8S)-3',8-cyclo-7,8-dihydroguanosine 5'-triphosphate to cyclic pyranopterin monophosphate (cPMP). In Ectopseudomonas mendocina (strain ymp) (Pseudomonas mendocina), this protein is Cyclic pyranopterin monophosphate synthase.